The primary structure comprises 314 residues: 3'-5' exoribonuclease YhaM (314 aa).

An HD domain is found at His163 to Lys279.

Belongs to the YhaM family.

Functionally, shows a 3'-5' exoribonuclease activity. The sequence is that of 3'-5' exoribonuclease YhaM from Bacillus velezensis (strain DSM 23117 / BGSC 10A6 / LMG 26770 / FZB42) (Bacillus amyloliquefaciens subsp. plantarum).